The following is a 129-amino-acid chain: Follitropin subunit beta (129 aa).

An N-terminal signal peptide occupies residues 1-18 (MKSIQFCFFFCCWKAICC). Intrachain disulfides connect C21/C69, C35/C84, C38/C122, C46/C100, C50/C102, and C105/C112. N-linked (GlcNAc...) asparagine glycans are attached at residues N25 and N42.

The protein belongs to the glycoprotein hormones subunit beta family. In terms of assembly, heterodimer. The active follitropin is a heterodimer composed of an alpha chain/CGA shared with other hormones and a unique beta chain/FSHB shown here.

It is found in the secreted. Functionally, together with the alpha chain CGA constitutes follitropin, the follicle-stimulating hormone, and provides its biological specificity to the hormone heterodimer. Binds FSHR, a G protein-coupled receptor, on target cells to activate downstream signaling pathways. Follitropin is involved in follicle development and spermatogenesis in reproductive organs. The chain is Follitropin subunit beta (FSHB) from Cavia porcellus (Guinea pig).